The primary structure comprises 401 residues: tRNA(Met) cytidine acetate ligase (401 aa).

ATP contacts are provided by residues 7–20 (IVEYNPFHNGHLYH), glycine 102, asparagine 164, and arginine 189.

This sequence belongs to the TmcAL family.

The protein localises to the cytoplasm. It catalyses the reaction cytidine(34) in elongator tRNA(Met) + acetate + ATP = N(4)-acetylcytidine(34) in elongator tRNA(Met) + AMP + diphosphate. Catalyzes the formation of N(4)-acetylcytidine (ac(4)C) at the wobble position of elongator tRNA(Met), using acetate and ATP as substrates. First activates an acetate ion to form acetyladenylate (Ac-AMP) and then transfers the acetyl group to tRNA to form ac(4)C34. The sequence is that of tRNA(Met) cytidine acetate ligase from Thermoanaerobacter sp. (strain X514).